A 139-amino-acid polypeptide reads, in one-letter code: D-ribose pyranase (139 aa).

His20 acts as the Proton donor in catalysis. Substrate-binding positions include Asp28, His106, and 128–130 (YAN).

The protein belongs to the RbsD / FucU family. RbsD subfamily. As to quaternary structure, homodecamer.

It is found in the cytoplasm. The enzyme catalyses beta-D-ribopyranose = beta-D-ribofuranose. It functions in the pathway carbohydrate metabolism; D-ribose degradation; D-ribose 5-phosphate from beta-D-ribopyranose: step 1/2. Its function is as follows. Catalyzes the interconversion of beta-pyran and beta-furan forms of D-ribose. This chain is D-ribose pyranase, found in Cronobacter sakazakii (strain ATCC BAA-894) (Enterobacter sakazakii).